A 178-amino-acid polypeptide reads, in one-letter code: Putative adenylate kinase (178 aa).

ATP-binding residues include Gly10, Gly12, Lys13, Ser14, and Ser15. The interval 29–50 (TVVELAEKHGCIIDEEDGEIVI) is NMP. An LID region spans residues 94-104 (GRNWSEEKLLE). Residue Arg95 participates in ATP binding.

Belongs to the adenylate kinase family. AK6 subfamily. Interacts with uS11. Not a structural component of 40S pre-ribosomes, but transiently interacts with them by binding to uS11.

It catalyses the reaction AMP + ATP = 2 ADP. It carries out the reaction ATP + H2O = ADP + phosphate + H(+). In terms of biological role, broad-specificity nucleoside monophosphate (NMP) kinase that catalyzes the reversible transfer of the terminal phosphate group between nucleoside triphosphates and monophosphates. Also has ATPase activity. Involved in the late maturation steps of the 30S ribosomal particles, specifically 16S rRNA maturation. While NMP activity is not required for ribosome maturation, ATPase activity is. Associates transiently with small ribosomal subunit protein uS11. ATP hydrolysis breaks the interaction with uS11. May temporarily remove uS11 from the ribosome to enable a conformational change of the ribosomal RNA that is needed for the final maturation step of the small ribosomal subunit. In Archaeoglobus fulgidus (strain ATCC 49558 / DSM 4304 / JCM 9628 / NBRC 100126 / VC-16), this protein is Putative adenylate kinase.